A 213-amino-acid chain; its full sequence is StAR-related lipid transfer protein 5 (213 aa).

The region spanning 1 to 213 is the START domain; sequence MDLATAAQVS…LEKAVKKFFG (213 aa).

May be involved in the intracellular transport of sterols or other lipids. May bind cholesterol or other sterols. In Bos taurus (Bovine), this protein is StAR-related lipid transfer protein 5 (STARD5).